The chain runs to 397 residues: Phosphoglycerate kinase (397 aa).

Residues 19–21 (DFN), arginine 35, 58–61 (HLGR), arginine 117, and arginine 150 each bind substrate. Residues lysine 201, glutamate 323, and 349-352 (GGDS) contribute to the ATP site.

Belongs to the phosphoglycerate kinase family. As to quaternary structure, monomer.

It localises to the cytoplasm. It catalyses the reaction (2R)-3-phosphoglycerate + ATP = (2R)-3-phospho-glyceroyl phosphate + ADP. It participates in carbohydrate degradation; glycolysis; pyruvate from D-glyceraldehyde 3-phosphate: step 2/5. The protein is Phosphoglycerate kinase of Syntrophobacter fumaroxidans (strain DSM 10017 / MPOB).